The chain runs to 217 residues: Small ribosomal subunit protein uS3 (217 aa).

Positions 38–106 (IRKFIDNELK…KVHINVIEIK (69 aa)) constitute a KH type-2 domain.

Belongs to the universal ribosomal protein uS3 family. As to quaternary structure, part of the 30S ribosomal subunit. Forms a tight complex with proteins S10 and S14.

Its function is as follows. Binds the lower part of the 30S subunit head. Binds mRNA in the 70S ribosome, positioning it for translation. The polypeptide is Small ribosomal subunit protein uS3 (Staphylococcus aureus (strain MSSA476)).